A 737-amino-acid polypeptide reads, in one-letter code: Palmitoyltransferase akr1 (737 aa).

Low complexity predominate over residues 1-15; that stretch reads MSSGNSSTGTHTNGN. A disordered region spans residues 1–39; the sequence is MSSGNSSTGTHTNGNFATLGSSPPSAVGGKGRAIPPKVT. Residues 1–313 are Cytoplasmic-facing; it reads MSSGNSSTGT…WVRNKSLMSK (313 aa). 5 ANK repeats span residues 96-125, 130-159, 163-192, 196-225, and 228-258; these read EGIT…DVNA, SVAT…DPLL, QGYN…PVDV, QGHT…HANA, and EGGL…DKFA. The next 2 membrane-spanning stretches (helical) occupy residues 314–334 and 335–355; these read FFFL…SNMV and VYAA…VAQK. At 356–374 the chain is on the cytoplasmic side; the sequence is AASQGPSEYRILQKTPYLS. A helical membrane pass occupies residues 375-395; the sequence is GVFAGSLFWVGFRYVFYVLPV. At 396-401 the chain is on the lumenal side; the sequence is TYSTSP. A helical transmembrane segment spans residues 402–422; sequence ILNGLFAIFFSLTTYFYIYSM. Residues 423–498 are Cytoplasmic-facing; sequence VEDPGFVPKL…DNCVGANNLR (76 aa). One can recognise a DHHC domain in the interval 455–505; that stretch reads NFCVSCMVRRPLRSKHCKRCARCVAKHDHHCPWIDNCVGANNLRHFVLYIT. Residue C485 is the S-palmitoyl cysteine intermediate of the active site. A helical transmembrane segment spans residues 499–519; that stretch reads HFVLYITCLEVGIVLFVQLTF. The Lumenal segment spans residues 520–548; the sequence is NYINSLPAPAQPQCNIINETLCDFVLRDT. A helical transmembrane segment spans residues 549-569; sequence FTLVLDLWVCIQLVWITMLVA. Over 570-737 the chain is Cytoplasmic; sequence VQMIQISRNQ…LSVEDPEQGV (168 aa).

The protein belongs to the DHHC palmitoyltransferase family. AKR/ZDHHC17 subfamily.

It is found in the early endosome membrane. It localises to the golgi apparatus membrane. The enzyme catalyses L-cysteinyl-[protein] + hexadecanoyl-CoA = S-hexadecanoyl-L-cysteinyl-[protein] + CoA. Functionally, palmitoyltransferase specific for casein kinase 1. This chain is Palmitoyltransferase akr1 (akr1), found in Aspergillus oryzae (strain ATCC 42149 / RIB 40) (Yellow koji mold).